The chain runs to 507 residues: Ribonuclease Y (507 aa).

A helical membrane pass occupies residues 1–21; sequence MLWYIVAGAGGLLIGYLIANY. Positions 197–282 constitute a KH domain; sequence TVSTVSLPSD…EMYEKAKQEV (86 aa). The HD domain occupies 323-416; sequence VLNHSIEVAL…VAAADALSAA (94 aa).

Belongs to the RNase Y family.

Its subcellular location is the cell membrane. Its function is as follows. Endoribonuclease that initiates mRNA decay. This chain is Ribonuclease Y, found in Thermotoga sp. (strain RQ2).